The primary structure comprises 79 residues: Small ribosomal subunit protein uS17 (79 aa).

Belongs to the universal ribosomal protein uS17 family. Part of the 30S ribosomal subunit.

One of the primary rRNA binding proteins, it binds specifically to the 5'-end of 16S ribosomal RNA. The protein is Small ribosomal subunit protein uS17 of Orientia tsutsugamushi (strain Boryong) (Rickettsia tsutsugamushi).